The sequence spans 373 residues: Centrosomal protein of 41 kDa (373 aa).

Residues 89 to 137 (QRLEDNDSAASDPDAETTARTNGKGNPGEQSPSPEQFINNAGAGDSSRS) are disordered. 2 positions are modified to phosphoserine: serine 96 and serine 99. A compositionally biased stretch (polar residues) spans 106–127 (TARTNGKGNPGEQSPSPEQFIN). A Phosphothreonine modification is found at threonine 109. Position 121 is a phosphoserine (serine 121). Residues 169–266 (PDCPFLLLDV…LAQKFPEGLI (98 aa)) enclose the Rhodanese domain. Residues 275–373 (QQALPPGSAR…SGHLQGKPWK (99 aa)) are disordered. Basic and acidic residues predominate over residues 298 to 312 (NKWRFTPEDLKKIEY). Omega-N-methylarginine is present on arginine 343. Residues 355–366 (SHSNPRSLSSGH) are compositionally biased toward polar residues.

The protein belongs to the CEP41 family. Found in a complex with TTLL6. Expressed in testis and fetal tissues.

The protein localises to the cytoplasm. It localises to the cytoskeleton. It is found in the microtubule organizing center. The protein resides in the centrosome. Its subcellular location is the cell projection. The protein localises to the cilium. It localises to the cilium basal body. Its function is as follows. Required during ciliogenesis for tubulin glutamylation in cilium. Probably acts by participating in the transport of TTLL6, a tubulin polyglutamylase, between the basal body and the cilium. The polypeptide is Centrosomal protein of 41 kDa (CEP41) (Homo sapiens (Human)).